A 301-amino-acid polypeptide reads, in one-letter code: tRNA dimethylallyltransferase 1 (301 aa).

10-17 (GPTASGKT) is an ATP binding site. 12–17 (TASGKT) lines the substrate pocket. The segment at 35-38 (DSRQ) is interaction with substrate tRNA.

It belongs to the IPP transferase family. Monomer. Mg(2+) serves as cofactor.

The enzyme catalyses adenosine(37) in tRNA + dimethylallyl diphosphate = N(6)-dimethylallyladenosine(37) in tRNA + diphosphate. Catalyzes the transfer of a dimethylallyl group onto the adenine at position 37 in tRNAs that read codons beginning with uridine, leading to the formation of N6-(dimethylallyl)adenosine (i(6)A). This chain is tRNA dimethylallyltransferase 1, found in Geotalea uraniireducens (strain Rf4) (Geobacter uraniireducens).